The chain runs to 149 residues: Cyanate hydratase (149 aa).

Active-site residues include Arg-90, Glu-93, and Ser-116.

It belongs to the cyanase family.

It catalyses the reaction cyanate + hydrogencarbonate + 3 H(+) = NH4(+) + 2 CO2. Functionally, catalyzes the reaction of cyanate with bicarbonate to produce ammonia and carbon dioxide. This is Cyanate hydratase from Synechocystis sp. (strain ATCC 27184 / PCC 6803 / Kazusa).